The primary structure comprises 1328 residues: Myb-binding protein 1A (1328 aa).

The interval 1–22 (MESRDPAQPMSPGEATQSGARP) is disordered. The interval 1–582 (MESRDPAQPM…WDRMLQTLKE (582 aa)) is interaction with MYB. S11 carries the post-translational modification Phosphoserine. K71 and K158 each carry N6-acetyllysine. 2 consecutive short sequence motifs (nuclear export signal) follow at residues 240–258 (SDENVPRLVNVLKMAASSV) and 263–281 (KLPAIALDLLRLALKEDKF). Positions 698–753 (SEDENDRVVVTDDSDERRLKGAEDKSEEGEDNRSSESEEESEGEESEEEERDGDVD) are disordered. Over residues 703-721 (DRVVVTDDSDERRLKGAED) the composition is skewed to basic and acidic residues. A compositionally biased stretch (acidic residues) spans 734–752 (SEEESEGEESEEEERDGDV). S775 carries the phosphoserine modification. Positions 1146 to 1292 (RPKLEKKDAK…KKGVLGKSPL (147 aa)) are disordered. The segment covering 1147 to 1156 (PKLEKKDAKE) has biased composition (basic and acidic residues). A Glycyl lysine isopeptide (Lys-Gly) (interchain with G-Cter in SUMO2) cross-link involves residue K1148. The required for nuclear and nucleolar localization stretch occupies residues 1151–1328 (KKDAKEIPSA…KAQVRKAGKP (178 aa)). 2 positions are modified to phosphoserine: S1159 and S1163. A compositionally biased stretch (basic residues) spans 1166-1184 (SKKRKKKGFLPETKKRKKR). Position 1186 is a phosphoserine (S1186). Phosphothreonine occurs at positions 1190 and 1196. A Phosphoserine modification is found at S1207. Over residues 1209–1218 (GRKKRNRTKA) the composition is skewed to basic residues. S1232 is modified (phosphoserine). Phosphothreonine is present on T1239. S1241 bears the Phosphoserine mark. Phosphothreonine is present on T1244. Residues S1248 and S1267 each carry the phosphoserine modification. Phosphothreonine is present on T1269. A phosphoserine mark is found at S1290 and S1303. The disordered stretch occupies residues 1306–1328 (IRSPSLLQSGAKKKAQVRKAGKP). R1307 is modified (citrulline). A phosphoserine mark is found at S1308, S1310, and S1314. Residues 1316–1328 (AKKKAQVRKAGKP) are compositionally biased toward basic residues.

This sequence belongs to the MYBBP1A family. In terms of assembly, binds to and represses JUN and MYB via the leucine zipper regions present in these proteins. Also binds to and represses PPARGC1A: this interaction is abrogated when PPARGC1A is phosphorylated by MAPK1/ERK. Binds to and stimulates transcription by AHR. Binds to KPNA2. Interacts with CLOCK and CRY1. Component of the B-WICH complex, at least composed of SMARCA5/SNF2H, BAZ1B/WSTF, SF3B1, DEK, MYO1C, ERCC6, MYBBP1A and DDX21. Post-translationally, citrullinated by PADI4.

The protein localises to the cytoplasm. It is found in the nucleus. The protein resides in the nucleolus. In terms of biological role, may activate or repress transcription via interactions with sequence specific DNA-binding proteins. Repression may be mediated at least in part by histone deacetylase activity (HDAC activity). Acts as a corepressor and in concert with CRY1, represses the transcription of the core circadian clock component PER2. Preferentially binds to dimethylated histone H3 'Lys-9' (H3K9me2) on the PER2 promoter. Has a role in rRNA biogenesis together with PWP1. This Homo sapiens (Human) protein is Myb-binding protein 1A (MYBBP1A).